The sequence spans 220 residues: Methylamine utilization ferredoxin-type protein MauM (220 aa).

2 consecutive 4Fe-4S ferredoxin-type domains span residues 50-80 (ALPEDDFLAACVRCGLCVRACPYDTLRLAEM) and 88-120 (TPFFVARETPCFMCTDVPCAKACPTGALDRDIP). The [4Fe-4S] cluster site is built by Cys-60, Cys-63, Cys-66, Cys-70, Cys-98, Cys-101, Cys-106, Cys-110, Cys-138, Cys-146, Cys-149, Cys-153, Cys-182, Cys-185, Cys-188, and Cys-192. The 4Fe-4S ferredoxin-type 3 domain occupies 173-204 (VIPTVHSDKCTGCGTCEKHCVLGQAAIRVLPR).

It participates in one-carbon metabolism; methylamine degradation. In terms of biological role, involved in electron transfer. In Methylorubrum extorquens (strain ATCC 14718 / DSM 1338 / JCM 2805 / NCIMB 9133 / AM1) (Methylobacterium extorquens), this protein is Methylamine utilization ferredoxin-type protein MauM (mauM).